Consider the following 492-residue polypeptide: MTLWINGDWITGQGASRVKRNPVSGEVLWQGNDADAAQVEQACRAARAAFPRWARLSLAERQVVVERFAGLLERNKGELTAIIARETGKPRWEAATEVTAMINKIAISIKAYHVRTGEQRSEMPDGAASLRHRPHGVLAVFGPYNFPGHLPNGHIVPALLAGNTIIFKPSELTPWSGEAVMRLWQQAGLPPGVLNLVQGGRETGQALSALEDLDGLLFTGSANTGYQLHRQLSGQPEKILALEMGGNNPLIIDEVADIDAAVHLTIQSAFVTAGQRCTCARRLLLKSGAQGDAFLARLVAVSQRLTPGNWDDEPQPFIGGLISEQAAQQVVTAWQQLEAMGGRTLLAPRLLQSETSLLTPGIIEMTGVAGVPDEEVFGPLLRVWRYDSFEEAILMANNTRFGLSCGLVSPEREKFDQLLLEARAGIVNWNKPLTGAASTAPFGGIGASGNHRPSAWYAADYCAWPMASLESDSLTLPATLNPGLDFSDEVVR.

220-225 is a binding site for NAD(+); sequence GSANTG. Active-site residues include Glu243 and Cys277.

The protein belongs to the aldehyde dehydrogenase family. AstD subfamily.

It catalyses the reaction N-succinyl-L-glutamate 5-semialdehyde + NAD(+) + H2O = N-succinyl-L-glutamate + NADH + 2 H(+). The protein operates within amino-acid degradation; L-arginine degradation via AST pathway; L-glutamate and succinate from L-arginine: step 4/5. Catalyzes the NAD-dependent reduction of succinylglutamate semialdehyde into succinylglutamate. The protein is N-succinylglutamate 5-semialdehyde dehydrogenase of Escherichia coli (strain 55989 / EAEC).